The primary structure comprises 156 residues: Ribosomal RNA large subunit methyltransferase H (156 aa).

S-adenosyl-L-methionine-binding positions include Leu73, Gly104, and 123–128 (LSALTL).

This sequence belongs to the RNA methyltransferase RlmH family. Homodimer.

Its subcellular location is the cytoplasm. It carries out the reaction pseudouridine(1915) in 23S rRNA + S-adenosyl-L-methionine = N(3)-methylpseudouridine(1915) in 23S rRNA + S-adenosyl-L-homocysteine + H(+). Its function is as follows. Specifically methylates the pseudouridine at position 1915 (m3Psi1915) in 23S rRNA. The sequence is that of Ribosomal RNA large subunit methyltransferase H from Shewanella sp. (strain ANA-3).